Here is a 465-residue protein sequence, read N- to C-terminus: 2-(3-amino-3-carboxypropyl)histidine synthase subunit 1 (465 aa).

Polar residues predominate over residues 1-14 (MADSVEQSSVTTKR). The tract at residues 1–42 (MADSVEQSSVTTKRISAKGARKRFVGTKSASGKHSQGVDRVG) is disordered. The span at 15 to 25 (ISAKGARKRFV) shows a compositional bias: basic residues. Positions 127, 230, and 357 each coordinate [4Fe-4S] cluster. Positions 442–465 (SECGSGETCCGKCTKETDKHSSTP) are disordered. The span at 454–465 (CTKETDKHSSTP) shows a compositional bias: basic and acidic residues.

Belongs to the DPH1/DPH2 family. DPH1 subfamily. As to quaternary structure, component of the 2-(3-amino-3-carboxypropyl)histidine synthase complex composed of dph1, dph2, dph3 and a NADH-dependent reductase. [4Fe-4S] cluster is required as a cofactor.

It carries out the reaction L-histidyl-[translation elongation factor 2] + S-adenosyl-L-methionine = 2-[(3S)-amino-3-carboxypropyl]-L-histidyl-[translation elongation factor 2] + S-methyl-5'-thioadenosine + H(+). It participates in protein modification; peptidyl-diphthamide biosynthesis. Catalyzes the first step of diphthamide biosynthesis, a post-translational modification of histidine which occurs in elongation factor 2. Dph1 and dph2 transfer a 3-amino-3-carboxypropyl (ACP) group from S-adenosyl-L-methionine (SAM) to a histidine residue, the reaction is assisted by a reduction system comprising dph3 and a NADH-dependent reductase. The protein is 2-(3-amino-3-carboxypropyl)histidine synthase subunit 1 (dph1) of Nematostella vectensis (Starlet sea anemone).